The chain runs to 290 residues: Ribosomal RNA small subunit methyltransferase A (290 aa).

The S-adenosyl-L-methionine site is built by histidine 37, valine 39, glycine 64, glutamate 85, aspartate 115, and asparagine 132.

This sequence belongs to the class I-like SAM-binding methyltransferase superfamily. rRNA adenine N(6)-methyltransferase family. RsmA subfamily.

Its subcellular location is the cytoplasm. The enzyme catalyses adenosine(1518)/adenosine(1519) in 16S rRNA + 4 S-adenosyl-L-methionine = N(6)-dimethyladenosine(1518)/N(6)-dimethyladenosine(1519) in 16S rRNA + 4 S-adenosyl-L-homocysteine + 4 H(+). Its function is as follows. Specifically dimethylates two adjacent adenosines (A1518 and A1519) in the loop of a conserved hairpin near the 3'-end of 16S rRNA in the 30S particle. May play a critical role in biogenesis of 30S subunits. In Acidothermus cellulolyticus (strain ATCC 43068 / DSM 8971 / 11B), this protein is Ribosomal RNA small subunit methyltransferase A.